A 312-amino-acid chain; its full sequence is Pantothenate kinase (312 aa).

An ATP-binding site is contributed by 92-99 (GSVAVGKS).

Belongs to the prokaryotic pantothenate kinase family.

The protein localises to the cytoplasm. The catalysed reaction is (R)-pantothenate + ATP = (R)-4'-phosphopantothenate + ADP + H(+). It functions in the pathway cofactor biosynthesis; coenzyme A biosynthesis; CoA from (R)-pantothenate: step 1/5. This Vibrio cholerae serotype O1 (strain ATCC 39315 / El Tor Inaba N16961) protein is Pantothenate kinase (coaA).